A 65-amino-acid chain; its full sequence is Large ribosomal subunit protein bL35 (65 aa).

The protein belongs to the bacterial ribosomal protein bL35 family.

In Alkalilimnicola ehrlichii (strain ATCC BAA-1101 / DSM 17681 / MLHE-1), this protein is Large ribosomal subunit protein bL35.